Consider the following 371-residue polypeptide: Glutamate 5-kinase (371 aa).

Residue lysine 14 coordinates ATP. Substrate contacts are provided by serine 54, aspartate 141, and asparagine 153. 173-174 (TD) contributes to the ATP binding site. The PUA domain maps to 280–357 (AGDLILDDGA…TQIEKLLGYI (78 aa)).

The protein belongs to the glutamate 5-kinase family.

The protein localises to the cytoplasm. The enzyme catalyses L-glutamate + ATP = L-glutamyl 5-phosphate + ADP. Its pathway is amino-acid biosynthesis; L-proline biosynthesis; L-glutamate 5-semialdehyde from L-glutamate: step 1/2. Its function is as follows. Catalyzes the transfer of a phosphate group to glutamate to form L-glutamate 5-phosphate. The polypeptide is Glutamate 5-kinase (Aromatoleum aromaticum (strain DSM 19018 / LMG 30748 / EbN1) (Azoarcus sp. (strain EbN1))).